A 464-amino-acid polypeptide reads, in one-letter code: UDP-N-acetylmuramoylalanine--D-glutamate ligase (464 aa).

127–133 (GSNGKST) contacts ATP.

The protein belongs to the MurCDEF family.

It is found in the cytoplasm. It carries out the reaction UDP-N-acetyl-alpha-D-muramoyl-L-alanine + D-glutamate + ATP = UDP-N-acetyl-alpha-D-muramoyl-L-alanyl-D-glutamate + ADP + phosphate + H(+). Its pathway is cell wall biogenesis; peptidoglycan biosynthesis. Functionally, cell wall formation. Catalyzes the addition of glutamate to the nucleotide precursor UDP-N-acetylmuramoyl-L-alanine (UMA). This is UDP-N-acetylmuramoylalanine--D-glutamate ligase from Dinoroseobacter shibae (strain DSM 16493 / NCIMB 14021 / DFL 12).